Reading from the N-terminus, the 479-residue chain is HSPB1-associated protein 1 (479 aa).

Positions methionine 1 to valine 25 are disordered. The interval glutamate 88–arginine 208 is interaction with HSPB1. Residues tryptophan 124–threonine 288 form the JmjC domain. The disordered stretch occupies residues proline 347–asparagine 412. The span at valine 356–serine 369 shows a compositional bias: basic and acidic residues.

In terms of assembly, interacts with CRYAB and HSPB1. Widely expressed. Highly expressed by Sertoli cells in testis (at protein level).

The protein resides in the cytoplasm. Functionally, may play a role in cellular stress response. This is HSPB1-associated protein 1 (Hspbap1) from Rattus norvegicus (Rat).